We begin with the raw amino-acid sequence, 2259 residues long: Putative Polycomb group protein ASXL3 (2259 aa).

The region spanning 10–83 is the HTH HARE-type domain; sequence RTWAEAARLA…KSGLYALRKE (74 aa). The interval 181–230 is disordered; it reads VVLTPLKVSDEQSDSPSGSESKNGEADSSDKEMKHGQKSPTGKQTSQHLK. Over residues 202–215 the composition is skewed to basic and acidic residues; it reads KNGEADSSDKEMKH. A compositionally biased stretch (polar residues) spans 218–227; the sequence is KSPTGKQTSQ. The DEUBAD domain occupies 253-362; the sequence is PGSILVNTNL…FERFYGERSG (110 aa). 10 disordered regions span residues 364 to 399, 607 to 643, 703 to 810, 857 to 1012, 1025 to 1049, 1126 to 1150, 1433 to 1462, 1614 to 1643, 1687 to 1719, and 1993 to 2075; these read SREESIKLTSGPNHEGAEGSSSHGDSGIPGPSAQNA, CISETSFSSESPEGACASLPSPGGETQSTSEESCTPA, EASP…IPEP, SEMT…PLKI, SQPVSKAESRASTSTSVSSGRNTGA, RLPSVSTKEDSLNMEASPTPETKME, LSGENLDNNSGPLNRTDNSEKPQQPAGGFV, DPMRNTAPPVVSHSSSSKQKEHPEQTGLKA, DFPGPERPPPVTEVTSSASVQPTQTMKPSTTSP, and NMLS…TTKR. 3 stretches are compositionally biased toward polar residues: residues 607–617, 630–643, and 703–717; these read CISETSFSSES, GETQSTSEESCTPA, and EASPVSNLPLTSEAS. Residues 722-741 are compositionally biased toward low complexity; that stretch reads LPPTSETSSESSMPLTSETP. Polar residues-rich tracts occupy residues 770-781 and 926-945; these read KSPSGSEEANSP and QSSTLNRLETSHTSKVSEPS. Composition is skewed to basic and acidic residues over residues 949–985 and 995–1006; these read DGIRNDNRESEISKRKTVEHSFGICKEKRARIEDDQS and PEKEQPPREEPR. Over residues 1034–1043 the composition is skewed to low complexity; that stretch reads RASTSTSVSS. Residues 1437 to 1448 show a composition bias toward polar residues; it reads NLDNNSGPLNRT. Positions 1699–1719 are enriched in polar residues; sequence EVTSSASVQPTQTMKPSTTSP. The span at 2023-2055 shows a compositional bias: pro residues; it reads PLPPPPPPPPPPPPPLALPPPPPPPPPLPPPLP. A PHD-type; atypical zinc finger spans residues 2221–2258; sequence ELKCSCRLKAMIVCKGCGAFCHDDCIGPSKLCVACLVV.

This sequence belongs to the Asx family. As to quaternary structure, core component of the polycomb repressive deubiquitinase (PR-DUB) complex, at least composed of BAP1, one of ASXL1, ASXL2 or (probably) ASXL3, and one of MBD5 or MBD6. Distinct combinations of ASXL and MBD proteins may preferentially bind specific histone modification marks. The PR-DUB core associates with a number of accessory proteins, including FOXK1, FOXK2, KDM1B, HCFC1 and OGT; KDM1B specifically associates with ASXL2 PR-DUB complexes. Interacts (via PHD domain) with MBD5 and MBD6 (via MBD domain); the interaction is probably direct and mediates association of MBD proteins with the PR-DUB core.

The protein resides in the nucleus. In terms of biological role, putative Polycomb group (PcG) protein. PcG proteins act by forming multiprotein complexes, which are required to maintain the transcriptionally repressive state of homeotic genes throughout development. PcG proteins are not required to initiate repression, but to maintain it during later stages of development. They probably act via methylation of histones, rendering chromatin heritably changed in its expressibility. Non-catalytic component of the PR-DUB complex, a complex that specifically mediates deubiquitination of histone H2A monoubiquitinated at 'Lys-119' (H2AK119ub1). The PR-DUB complex is an epigenetic regulator of gene expression and acts as a transcriptional coactivator, affecting genes involved in development, cell communication, signaling, cell proliferation and cell viability. ASXL1, ASXL2 and ASXL3 function redundantly in the PR-DUB complex and are essential for chromatin recruitment and transcriptional activation of associated genes. The protein is Putative Polycomb group protein ASXL3 (Asxl3) of Mus musculus (Mouse).